Reading from the N-terminus, the 129-residue chain is Fluoride-specific ion channel FluC 1 (129 aa).

4 helical membrane passes run 9–29 (LSVG…NLIW), 33–53 (GTLT…YFFV), 62–82 (LVTG…SFNL), and 98–118 (IYFF…MLVG). Na(+)-binding residues include Gly-72 and Thr-75.

The protein belongs to the fluoride channel Fluc/FEX (TC 1.A.43) family.

It is found in the cell membrane. The enzyme catalyses fluoride(in) = fluoride(out). With respect to regulation, na(+) is not transported, but it plays an essential structural role and its presence is essential for fluoride channel function. Fluoride-specific ion channel. Important for reducing fluoride concentration in the cell, thus reducing its toxicity. The chain is Fluoride-specific ion channel FluC 1 from Lactobacillus johnsonii (strain CNCM I-12250 / La1 / NCC 533).